Consider the following 212-residue polypeptide: Probable nicotinate-nucleotide adenylyltransferase (212 aa).

This sequence belongs to the NadD family.

It catalyses the reaction nicotinate beta-D-ribonucleotide + ATP + H(+) = deamido-NAD(+) + diphosphate. The protein operates within cofactor biosynthesis; NAD(+) biosynthesis; deamido-NAD(+) from nicotinate D-ribonucleotide: step 1/1. Its function is as follows. Catalyzes the reversible adenylation of nicotinate mononucleotide (NaMN) to nicotinic acid adenine dinucleotide (NaAD). This is Probable nicotinate-nucleotide adenylyltransferase from Saccharopolyspora erythraea (strain ATCC 11635 / DSM 40517 / JCM 4748 / NBRC 13426 / NCIMB 8594 / NRRL 2338).